The sequence spans 583 residues: Thiol:disulfide interchange protein DsbD (583 aa).

A signal peptide spans 1–18 (MRRLFLLLFMLFTTLAHA). Disulfide bonds link Cys-118–Cys-124 and Cys-186–Cys-306. 8 consecutive transmembrane segments (helical) span residues 168-188 (GLGL…PCSL), 214-234 (SYVL…ALLG), 245-265 (WVLG…FGFF), 289-309 (LIGC…CMTA), 326-346 (FGGL…LLLV), 359-379 (WMNL…IYML), 382-402 (VLNP…VAYC), and 413-433 (LLHL…MLLV). A Thioredoxin domain is found at 458-581 (VTAHDAFTTV…FLQRWTQTRE (124 aa)). A disulfide bridge connects residues Cys-496 and Cys-499.

The protein belongs to the thioredoxin family. DsbD subfamily.

The protein localises to the cell inner membrane. It catalyses the reaction [protein]-dithiol + NAD(+) = [protein]-disulfide + NADH + H(+). The catalysed reaction is [protein]-dithiol + NADP(+) = [protein]-disulfide + NADPH + H(+). Required to facilitate the formation of correct disulfide bonds in some periplasmic proteins and for the assembly of the periplasmic c-type cytochromes. Acts by transferring electrons from cytoplasmic thioredoxin to the periplasm. This transfer involves a cascade of disulfide bond formation and reduction steps. The protein is Thiol:disulfide interchange protein DsbD of Pseudomonas fluorescens (strain ATCC BAA-477 / NRRL B-23932 / Pf-5).